The sequence spans 414 residues: Testis-specific Y-encoded-like protein 4 (414 aa).

2 disordered regions span residues 1–129 and 391–414; these read MSGL…AGQK and PRRGIRGPPRQPVESARSFRFQSG. Basic and acidic residues predominate over residues 24-40; it reads ASGDPDRDQCQGLREET. Positions 101–112 are enriched in low complexity; the sequence is EAASAAEAADSS.

It belongs to the nucleosome assembly protein (NAP) family.

In Homo sapiens (Human), this protein is Testis-specific Y-encoded-like protein 4 (TSPYL4).